A 195-amino-acid chain; its full sequence is uncharacterized protein (195 aa).

The segment at 143 to 195 (NKLIETINTNRTNNTDNKSTKSKKQTETKKSLRTNKIVKQPINKSKKNIREEY) is disordered. Low complexity predominate over residues 148–159 (TINTNRTNNTDN).

This is an uncharacterized protein from Acanthamoeba polyphaga (Amoeba).